We begin with the raw amino-acid sequence, 338 residues long: Ketol-acid reductoisomerase (NADP(+)) (338 aa).

Residues 1–181 (MHVYYDKDCD…GGGRTGIIET (181 aa)) enclose the KARI N-terminal Rossmann domain. Residues 24-27 (YGSQ), Arg-47, Ser-50, Thr-52, and 82-85 (DEFQ) each bind NADP(+). His-107 is a catalytic residue. NADP(+) is bound at residue Gly-133. The KARI C-terminal knotted domain maps to 182–327 (TFKDETETDL…AKLRAMMPWI (146 aa)). Asp-190, Glu-194, Glu-226, and Glu-230 together coordinate Mg(2+). Ser-251 contacts substrate.

This sequence belongs to the ketol-acid reductoisomerase family. It depends on Mg(2+) as a cofactor.

The enzyme catalyses (2R)-2,3-dihydroxy-3-methylbutanoate + NADP(+) = (2S)-2-acetolactate + NADPH + H(+). The catalysed reaction is (2R,3R)-2,3-dihydroxy-3-methylpentanoate + NADP(+) = (S)-2-ethyl-2-hydroxy-3-oxobutanoate + NADPH + H(+). Its pathway is amino-acid biosynthesis; L-isoleucine biosynthesis; L-isoleucine from 2-oxobutanoate: step 2/4. It participates in amino-acid biosynthesis; L-valine biosynthesis; L-valine from pyruvate: step 2/4. Involved in the biosynthesis of branched-chain amino acids (BCAA). Catalyzes an alkyl-migration followed by a ketol-acid reduction of (S)-2-acetolactate (S2AL) to yield (R)-2,3-dihydroxy-isovalerate. In the isomerase reaction, S2AL is rearranged via a Mg-dependent methyl migration to produce 3-hydroxy-3-methyl-2-ketobutyrate (HMKB). In the reductase reaction, this 2-ketoacid undergoes a metal-dependent reduction by NADPH to yield (R)-2,3-dihydroxy-isovalerate. This chain is Ketol-acid reductoisomerase (NADP(+)), found in Cellvibrio japonicus (strain Ueda107) (Pseudomonas fluorescens subsp. cellulosa).